The primary structure comprises 246 residues: Large ribosomal subunit protein uL30 (246 aa).

This sequence belongs to the universal ribosomal protein uL30 family.

Functionally, binds to G-rich structures in 28S rRNA and in mRNAs. Plays a regulatory role in the translation apparatus; inhibits cell-free translation of mRNAs. The chain is Large ribosomal subunit protein uL30 (rpl7) from Dictyostelium discoideum (Social amoeba).